The primary structure comprises 301 residues: Vomeronasal type-1 receptor 4 (301 aa).

The Extracellular segment spans residues 1 to 5 (MASRY). A helical transmembrane segment spans residues 6–26 (VAVGMILSQTVVGVLGSFSVL). Over 27-48 (LHYLSFYCTGCRLRSTDLIVKH) the chain is Cytoplasmic. A helical membrane pass occupies residues 49 to 69 (LIVANFLALRCKGVPQTMAAF). Residues 70-88 (GVRYFLNALGCKLVFYLHR) lie on the Extracellular side of the membrane. The helical transmembrane segment at 89-109 (VGRGVSIGTTCLLSVFQVITV) threads the bilayer. At 110–126 (SSRKSRWAKLKEKAPKH) the chain is on the cytoplasmic side. Residues 127-147 (VGFSVLLCWIVCMLVNIIFPM) form a helical membrane-spanning segment. Residues 148 to 185 (YVTGKWNYTNITVNEDLGYCSGGGNNKIAQTLRAMLLS) lie on the Extracellular side of the membrane. N-linked (GlcNAc...) asparagine glycans are attached at residues asparagine 154 and asparagine 157. A helical transmembrane segment spans residues 186–206 (FPDVLCLGLMLWVSSSMVCIL). At 207–234 (HRHKQRVQHIDRSNLSPRASPENRATQS) the chain is on the cytoplasmic side. Residues 235–255 (ILILVSTFVSSYTLSCLFQVC) form a helical membrane-spanning segment. Over 256-264 (MALLDNPNS) the chain is Extracellular. Residues 265-285 (LLVNTSALMSVCFPTLSPFVL) form a helical membrane-spanning segment. Over 286–301 (MSCDPSVYRFCFAWKR) the chain is Cytoplasmic.

This sequence belongs to the G-protein coupled receptor 1 family.

Its subcellular location is the cell membrane. Its function is as follows. Putative pheromone receptor. In Homo sapiens (Human), this protein is Vomeronasal type-1 receptor 4 (VN1R4).